The following is a 100-amino-acid chain: Urease subunit gamma (100 aa).

The protein belongs to the urease gamma subunit family. Heterotrimer of UreA (gamma), UreB (beta) and UreC (alpha) subunits. Three heterotrimers associate to form the active enzyme.

It localises to the cytoplasm. The enzyme catalyses urea + 2 H2O + H(+) = hydrogencarbonate + 2 NH4(+). Its pathway is nitrogen metabolism; urea degradation; CO(2) and NH(3) from urea (urease route): step 1/1. The chain is Urease subunit gamma from Nocardia farcinica (strain IFM 10152).